Reading from the N-terminus, the 490-residue chain is GTPase Der (490 aa).

EngA-type G domains are found at residues 3-166 (PVVA…MDDV) and 203-376 (IKLA…DSST). Residues 9–16 (GRPNVGKS), 56–60 (DTGGI), 118–121 (NKTD), 209–216 (GRPNVGKS), 256–260 (DTAGV), and 321–324 (NKWD) contribute to the GTP site. The KH-like domain maps to 377–461 (RRVSTAMLTR…PIRIQFKEGE (85 aa)).

Belongs to the TRAFAC class TrmE-Era-EngA-EngB-Septin-like GTPase superfamily. EngA (Der) GTPase family. In terms of assembly, associates with the 50S ribosomal subunit.

Functionally, GTPase that plays an essential role in the late steps of ribosome biogenesis. The chain is GTPase Der from Salmonella gallinarum (strain 287/91 / NCTC 13346).